A 310-amino-acid polypeptide reads, in one-letter code: Junctional adhesion molecule C (310 aa).

The first 29 residues, 1 to 29 (MALSRRLRLRLYARLPDFFLLLLFRGCMI), serve as a signal peptide directing secretion. At 30–241 (EAVNLKSSNR…GQDMEVYDLN (212 aa)) the chain is on the extracellular side. The Ig-like V-type domain occupies 35–127 (KSSNRNPVVH…VALNDRKEVD (93 aa)). 2 cysteine pairs are disulfide-bonded: C53–C115 and C160–C219. Residues N104 and N192 are each glycosylated (N-linked (GlcNAc...) asparagine). In terms of domain architecture, Ig-like C2-type spans 139 to 236 (PVTPVCRIPA…AARCEGQDME (98 aa)). Residues 242–262 (IAGIIGGVLVVLIVLAVITMG) form a helical membrane-spanning segment. The Cytoplasmic segment spans residues 263 to 310 (ICCAYRRGCFISSKQDGESYKSPGKHDGVNYIRTSEEGDFRHKSSFVI). Residues C264 and C265 are each lipidated (S-palmitoyl cysteine).

The protein belongs to the immunoglobulin superfamily. Interacts with ITGAM. Interacts with GORASP2. In terms of processing, proteolytically cleaved from endothelial cells surface into a soluble form by ADAM10 and ADAM17; the release of soluble JAM3 is increased by pro-inflammatory factors. Post-translationally, N-glycosylated. S-palmitoylated by ZDHHC7. S-palmitoylation promotes expression at tight junctions. As to expression, colocalizes with Jam2 near the lumen of seminiferous tubulues. Detected at junctional plaques that correspond to cell-cell contacts between spermatids and Sertoli cells. Detected on endothelial cells, in brain vessels and kidney glomeruli (at protein level). Detected in heart, lung, liver, kidney, testis, thymus, lymph node and Peyer patch. Endothelial cells.

The protein resides in the cell membrane. It localises to the cell junction. Its subcellular location is the desmosome. It is found in the tight junction. The protein localises to the secreted. Its function is as follows. Junctional adhesion protein that mediates heterotypic cell-cell interactions with its cognate receptor JAM2 to regulate different cellular processes. Plays a role in homing and mobilization of hematopoietic stem and progenitor cells within the bone marrow. At the surface of bone marrow stromal cells, it contributes to the retention of the hematopoietic stem and progenitor cells expressing JAM3. Plays a central role in leukocytes extravasation by facilitating transmigration through the endothelium. Plays a role in spermatogenesis where JAM2 and JAM3, which are respectively expressed by Sertoli and germ cells, mediate an interaction between both cell types and play an essential role in the anchorage of germ cells onto Sertoli cells and the assembly of cell polarity complexes during spermatid differentiation. Also functions as a counter-receptor for ITGAM, mediating leukocyte-platelet interactions and is involved in the regulation of transepithelial migration of polymorphonuclear neutrophils (PMN). Plays a role in angiogenesis. Plays a role in the regulation of cell migration. During myogenesis, it is involved in myocyte fusion. In terms of biological role, promotes chemotaxis of vascular endothelial cells and stimulates angiogenesis. This is Junctional adhesion molecule C (Jam3) from Mus musculus (Mouse).